The chain runs to 474 residues: Ribosomal RNA small subunit methyltransferase F (474 aa).

S-adenosyl-L-methionine contacts are provided by residues Ala121–Lys127, Glu145, Asp172, and Asp190. The active-site Nucleophile is Cys243.

It belongs to the class I-like SAM-binding methyltransferase superfamily. RsmB/NOP family.

It localises to the cytoplasm. It carries out the reaction cytidine(1407) in 16S rRNA + S-adenosyl-L-methionine = 5-methylcytidine(1407) in 16S rRNA + S-adenosyl-L-homocysteine + H(+). Its function is as follows. Specifically methylates the cytosine at position 1407 (m5C1407) of 16S rRNA. This Shewanella piezotolerans (strain WP3 / JCM 13877) protein is Ribosomal RNA small subunit methyltransferase F.